Consider the following 354-residue polypeptide: Coiled-coil domain-containing protein 86 (354 aa).

The disordered stretch occupies residues 1-354; sequence MDTPLRRSRR…QPPQRPATKV (354 aa). Phosphoserine is present on residues serine 18 and serine 24. The span at 31–44 shows a compositional bias: basic and acidic residues; sequence VLVEFESNPKETGE. 2 positions are modified to phosphoserine: serine 47 and serine 53. The segment covering 49-58 has biased composition (low complexity); the sequence is PGLGSPSRQP. Position 60 is a phosphothreonine (threonine 60). Residues serine 61, serine 64, serine 75, serine 86, serine 105, serine 108, serine 123, and serine 183 each carry the phosphoserine modification. Residues 97 to 107 show a composition bias toward polar residues; that stretch reads FPQNQPESSPE. Residues 199 to 211 are compositionally biased toward basic and acidic residues; it reads PAREGPAPKKREG. Phosphoserine is present on residues serine 212 and serine 213. Positions 232 to 248 are enriched in basic residues; it reads GKPKSGRVWKDRSKKRF. Composition is skewed to basic and acidic residues over residues 267-289 and 297-311; these read DRQE…ERRR and AENL…RKAE. Positions 274–317 form a coiled coil; that stretch reads AKDFARHLEEEKERRRQEKKKRRAENLRRRLENERKAEIVQVIR. Basic residues predominate over residues 320-330; sequence AKLKRAKKKQL. Arginine 336 carries the citrulline modification.

Post-translationally, citrullinated by PADI4.

It localises to the nucleus. The protein localises to the chromosome. Its subcellular location is the nucleolus. Its function is as follows. Required for proper chromosome segregation during mitosis and error-free mitotic progression. In Bos taurus (Bovine), this protein is Coiled-coil domain-containing protein 86.